The sequence spans 303 residues: Aquaporin-7 (303 aa).

At 1–21 (MAPRSVLETIQSVLQKNMVRE) the chain is on the cytoplasmic side. Position 5 is a phosphoserine (S5). The helical transmembrane segment at 22–39 (FLAEFLSTYVMMVFGLGS) threads the bilayer. At 40–52 (VAHMVLGENSGSY) the chain is on the extracellular side. A helical transmembrane segment spans residues 53–70 (LGVNLGFGFGVTMGVHVA). Residues 71-74 (GGIS) lie on the Cytoplasmic side of the membrane. The discontinuously helical intramembrane region spans 75 to 88 (GAHMNAAVTFTNCA). The NPA 1 signature appears at 79–81 (NAA). The Cytoplasmic portion of the chain corresponds to 89–96 (LGRMTWKK). Residues 97–117 (FPVYVLGQFLGSFSAAATTYL) traverse the membrane as a helical segment. Topologically, residues 118 to 152 (IFYGAINHFAGGDLLVTGSKATANIFATYLPEYMT) are extracellular. The chain crosses the membrane as a helical span at residues 153–173 (LWRGFLDEAFVTGMLQLCLFA). Residues 174-185 (ITDKKNSPALQG) lie on the Cytoplasmic side of the membrane. Residues 186-202 (TEPLVIGILVTVLGVSL) form a helical membrane-spanning segment. Residues 203–206 (GMNS) are Extracellular-facing. The discontinuously helical intramembrane region spans 207–220 (GYAINPSRDLPPRL). The short motif at 211-213 (NPS) is the NPA 2 element. Topologically, residues 221-238 (FTFIAGWGKQVFRAGNNW) are extracellular. The chain crosses the membrane as a helical span at residues 239–260 (WWVPVVAPLLGAYLGGIVYLGL). Residues 261 to 303 (IHPSIPQDPQRLENFTARDQKVTASYKNAASANISGSVPLEHF) lie on the Cytoplasmic side of the membrane.

Belongs to the MIP/aquaporin (TC 1.A.8) family. Homotetramer; each monomer provides an independent glycerol/water pore. Two homotetramers on opposing membranes can dimerize, forming a cell-cell junction. Interacts with PLIN1. Phosphorylation by PKA could prevent the interaction with PLIN1. Detected in proximal tubules in kidney. Detected in the capillary network between muscle fibers in skeletal muscle and heart, and in spermatids and on spermatozoa tails in testis and epididymis. Detected in white and brown adipose tissue, especially on small blood vessels (at protein level). Detected in kidney and white adipose tissue.

The protein localises to the cell membrane. It is found in the cytoplasmic vesicle membrane. The protein resides in the lipid droplet. The enzyme catalyses glycerol(in) = glycerol(out). It carries out the reaction H2O(in) = H2O(out). The catalysed reaction is urea(in) = urea(out). Glycerol transport is regulated by pH, with the porin being permeable to glycerol at pH 7.4 but not at pH 5.5. Water permeability, however, is not influenced by pH. Functionally, aquaglyceroporins form homotetrameric transmembrane channels, with each monomer independently mediating glycerol and water transport across the plasma membrane along their osmotic gradient. Could also be permeable to urea. Mediates the efflux of glycerol, formed upon triglyceride hydrolysis, to avoid its accumulation in adipocytes and to make it available to other tissues. In the kidney, mediates the reabsorption of glycerol, preventing its loss in urine, again participating to energy homeostasis. In pancreatic beta cells, it also mediates the efflux of glycerol, regulating its intracellular levels. The chain is Aquaporin-7 from Mus musculus (Mouse).